Consider the following 381-residue polypeptide: MITVTEATATAGALQRLADQGVSVWLDDLSRRRIESGNLAELIRTKNVVGVTTNPSIFQAAIGSGEGYEEQLADLATRGVTVDEAVRMMTTADVRAAADVLRGVYDASGGRDGRVSIEVDPRLAHDTAATVAEARQLSWLVDRPNVMIKIPATKAGLPAITEVIGAGISVNVTLIFSLERYREVMDAYLAGLEKAQAAGIDLAGIHSVASFFVSRVDSEIDKRLSLLGTEEALGLRGRAALANARLAYEAYENVFAGDRFTALAGARANAQRPLWASTGVKDPAFRDTLYVEELVAPGTVNTMPEATLDAAADHGDVRGDTVTGGYAQARADLAAVERLGVSYDEVVEQLEQEGVAKFEAAWQELLAAVTKSLDSKGVDGE.

The active-site Schiff-base intermediate with substrate is the lysine 149.

The protein belongs to the transaldolase family. Type 2 subfamily.

Its subcellular location is the cytoplasm. The enzyme catalyses D-sedoheptulose 7-phosphate + D-glyceraldehyde 3-phosphate = D-erythrose 4-phosphate + beta-D-fructose 6-phosphate. It functions in the pathway carbohydrate degradation; pentose phosphate pathway; D-glyceraldehyde 3-phosphate and beta-D-fructose 6-phosphate from D-ribose 5-phosphate and D-xylulose 5-phosphate (non-oxidative stage): step 2/3. Transaldolase is important for the balance of metabolites in the pentose-phosphate pathway. The protein is Transaldolase 1 (tal1) of Streptomyces coelicolor (strain ATCC BAA-471 / A3(2) / M145).